We begin with the raw amino-acid sequence, 419 residues long: Tol-Pal system protein TolB (419 aa).

Residues 1-19 form the signal peptide; it reads MCNRIISLFLLLFTGQVIA.

It belongs to the TolB family. The Tol-Pal system is composed of five core proteins: the inner membrane proteins TolA, TolQ and TolR, the periplasmic protein TolB and the outer membrane protein Pal. They form a network linking the inner and outer membranes and the peptidoglycan layer.

The protein resides in the periplasm. Its function is as follows. Part of the Tol-Pal system, which plays a role in outer membrane invagination during cell division and is important for maintaining outer membrane integrity. In Legionella pneumophila (strain Paris), this protein is Tol-Pal system protein TolB.